Consider the following 297-residue polypeptide: tRNA pseudouridine synthase B (297 aa).

Catalysis depends on Asp-39, which acts as the Nucleophile.

Belongs to the pseudouridine synthase TruB family. Type 1 subfamily.

The catalysed reaction is uridine(55) in tRNA = pseudouridine(55) in tRNA. Functionally, responsible for synthesis of pseudouridine from uracil-55 in the psi GC loop of transfer RNAs. This is tRNA pseudouridine synthase B from Lactobacillus gasseri (strain ATCC 33323 / DSM 20243 / BCRC 14619 / CIP 102991 / JCM 1131 / KCTC 3163 / NCIMB 11718 / NCTC 13722 / AM63).